Here is a 565-residue protein sequence, read N- to C-terminus: Pentatricopeptide repeat-containing protein At3g20730 (565 aa).

PPR repeat units lie at residues Ser12–Ser46, Asn47–Arg77, Asp78–Ala112, Asn113–Gly147, Asn148–Arg178, Asp179–Pro213, Asp214–Arg248, Ser249–Arg279, Asp280–Met315, Asp316–Phe351, Asp352–Lys382, Asp383–Pro417, Asn418–Lys448, and Arg454–Ile484. The segment at Thr491–Tyr565 is type E motif; degenerate.

The protein belongs to the PPR family. PCMP-E subfamily.

This is Pentatricopeptide repeat-containing protein At3g20730 (PCMP-E94) from Arabidopsis thaliana (Mouse-ear cress).